The primary structure comprises 334 residues: Protein POLAR-like 1 (334 aa).

A compositionally biased stretch (basic and acidic residues) spans 53–63 (IRTSSEDDHHR). Positions 53–74 (IRTSSEDDHHRVGQFSDSPPPT) are disordered. The stretch at 273-300 (ETRQQEEIKELEIALDDAKQRLHLKETE) forms a coiled coil.

Its subcellular location is the cytoplasm. The protein localises to the cell cortex. In terms of biological role, acts as a stomatal lineage scaffold which regulates subcellular localization and transient polarization of kinases (e.g. ASK7/BIN2 and ASK3/SK12) involved in asymmetric cell division (ACD) in a BASL-dependent manner. This chain is Protein POLAR-like 1, found in Arabidopsis thaliana (Mouse-ear cress).